Here is a 138-residue protein sequence, read N- to C-terminus: von Willebrand factor C domain-containing protein 2-like (138 aa).

The N-terminal stretch at 1–21 is a signal peptide; sequence MALHIHEACILLLVIPGLVTS. The 60-residue stretch at 51–110 folds into the VWFC domain; sequence KGCVDDSGFVYKLGERFFPGHSNCPCVCALDGPVCDQPECPKIHPKCTKVEHNGCCPECK.

As to quaternary structure, peripherally associated with AMPAR complex. AMPAR complex consists of an inner core made of 4 pore-forming GluA/GRIA proteins (GRIA1, GRIA2, GRIA3 and GRIA4) and 4 major auxiliary subunits arranged in a twofold symmetry. One of the two pairs of distinct binding sites is occupied either by CNIH2, CNIH3 or CACNG2, CACNG3. The other harbors CACNG2, CACNG3, CACNG4, CACNG8 or GSG1L. This inner core of AMPAR complex is complemented by outer core constituents binding directly to the GluA/GRIA proteins at sites distinct from the interaction sites of the inner core constituents. Outer core constituents include at least PRRT1, PRRT2, CKAMP44/SHISA9, FRRS1L and NRN1. The proteins of the inner and outer core serve as a platform for other, more peripherally associated AMPAR constituents, including VWC2L. Alone or in combination, these auxiliary subunits control the gating and pharmacology of the AMPAR complex and profoundly impact their biogenesis and protein processing.

Its subcellular location is the secreted. It localises to the synapse. In terms of biological role, may play a role in neurogenesis. May play a role in bone differentiation and matrix mineralization. The protein is von Willebrand factor C domain-containing protein 2-like (VWC2L) of Macaca fascicularis (Crab-eating macaque).